Reading from the N-terminus, the 339-residue chain is Protein pelota homolog (339 aa).

This sequence belongs to the eukaryotic release factor 1 family. Pelota subfamily. As to quaternary structure, monomer. A divalent metal cation serves as cofactor.

It is found in the cytoplasm. Functionally, may function in recognizing stalled ribosomes, interact with stem-loop structures in stalled mRNA molecules, and effect endonucleolytic cleavage of the mRNA. May play a role in the release non-functional ribosomes and degradation of damaged mRNAs. Has endoribonuclease activity. The chain is Protein pelota homolog from Picrophilus torridus (strain ATCC 700027 / DSM 9790 / JCM 10055 / NBRC 100828 / KAW 2/3).